The following is a 216-amino-acid chain: LexA repressor (216 aa).

Positions 29-49 form a DNA-binding region, H-T-H motif; the sequence is RAEIAQALGFRSPNAAEDHLK. Residues Ser134 and Lys171 each act as for autocatalytic cleavage activity in the active site.

It belongs to the peptidase S24 family. As to quaternary structure, homodimer.

It carries out the reaction Hydrolysis of Ala-|-Gly bond in repressor LexA.. In terms of biological role, represses a number of genes involved in the response to DNA damage (SOS response), including recA and lexA. In the presence of single-stranded DNA, RecA interacts with LexA causing an autocatalytic cleavage which disrupts the DNA-binding part of LexA, leading to derepression of the SOS regulon and eventually DNA repair. This chain is LexA repressor, found in Bordetella parapertussis (strain 12822 / ATCC BAA-587 / NCTC 13253).